Reading from the N-terminus, the 312-residue chain is 4-diphosphocytidyl-2-C-methyl-D-erythritol kinase (312 aa).

Residue lysine 18 is part of the active site. 104–114 (PIAGGMGGGSA) provides a ligand contact to ATP. Aspartate 146 is a catalytic residue.

Belongs to the GHMP kinase family. IspE subfamily.

It catalyses the reaction 4-CDP-2-C-methyl-D-erythritol + ATP = 4-CDP-2-C-methyl-D-erythritol 2-phosphate + ADP + H(+). It functions in the pathway isoprenoid biosynthesis; isopentenyl diphosphate biosynthesis via DXP pathway; isopentenyl diphosphate from 1-deoxy-D-xylulose 5-phosphate: step 3/6. Functionally, catalyzes the phosphorylation of the position 2 hydroxy group of 4-diphosphocytidyl-2C-methyl-D-erythritol. In Clavibacter michiganensis subsp. michiganensis (strain NCPPB 382), this protein is 4-diphosphocytidyl-2-C-methyl-D-erythritol kinase.